The following is a 140-amino-acid chain: Oleosin Cor a 13 (140 aa).

The next 2 membrane-spanning stretches (helical) occupy residues 31-51 and 75-95; these read GSLL…LTLA and GFLA…WIYR.

The protein belongs to the oleosin family. As to expression, expressed in seeds.

The protein localises to the lipid droplet. Its subcellular location is the membrane. In terms of biological role, may have a structural role to stabilize the lipid body during desiccation of the seed by preventing coalescence of the oil. Probably interacts with both lipid and phospholipid moieties of lipid bodies. May also provide recognition signals for specific lipase anchorage in lipolysis during seedling growth. The chain is Oleosin Cor a 13 from Corylus avellana (European hazel).